Reading from the N-terminus, the 294-residue chain is Small ribosomal subunit protein uS2 (294 aa).

Basic and acidic residues predominate over residues 261-274 (MDEDADSKKSKAEE). The segment at 261–294 (MDEDADSKKSKAEEPVIPTAEEPAITTIEVDQNE) is disordered.

This sequence belongs to the universal ribosomal protein uS2 family.

This chain is Small ribosomal subunit protein uS2, found in Leptospira borgpetersenii serovar Hardjo-bovis (strain JB197).